The chain runs to 276 residues: Urease accessory protein UreD (276 aa).

The protein belongs to the UreD family. In terms of assembly, ureD, UreF and UreG form a complex that acts as a GTP-hydrolysis-dependent molecular chaperone, activating the urease apoprotein by helping to assemble the nickel containing metallocenter of UreC. The UreE protein probably delivers the nickel.

It localises to the cytoplasm. Required for maturation of urease via the functional incorporation of the urease nickel metallocenter. This is Urease accessory protein UreD from Variovorax paradoxus (strain S110).